The chain runs to 283 residues: Gap junction beta-1 protein (283 aa).

At 1-22 the chain is on the cytoplasmic side; sequence MNWTGLYTLLSGVNRHSTAIGR. The helical transmembrane segment at 23-45 threads the bilayer; the sequence is VWLSVIFIFRIMVLVVAAESVWG. At 46–75 the chain is on the extracellular side; that stretch reads DEKSSFICNTLQPGCNSVCYDHFFPISHVR. A helical transmembrane segment spans residues 76–95; that stretch reads LWSLQLILVSTPALLVAMHV. The Cytoplasmic portion of the chain corresponds to 96–130; that stretch reads AHQQHIEKKMLRLEGHGDPIHLEEVKRHKVHISGT. A helical transmembrane segment spans residues 131–153; sequence LWWTYVISVVFRLLFEAAFMYVF. The Extracellular portion of the chain corresponds to 154-191; sequence YLLYPGYAMVRLVKCDAYPCPNTVDCFVSRPTEKTVFT. The chain crosses the membrane as a helical span at residues 192 to 214; sequence VFMLAASGICIILNVAEVVYLIV. The Cytoplasmic portion of the chain corresponds to 215-283; that stretch reads RACARRAQRR…AEKSDRCSAC (69 aa). Residues S233, S258, S266, and S277 each carry the phosphoserine modification.

The protein belongs to the connexin family. Beta-type (group I) subfamily. As to quaternary structure, a connexon is composed of a hexamer of connexins. Interacts with CNST.

It localises to the cell membrane. The protein localises to the cell junction. Its subcellular location is the gap junction. One gap junction consists of a cluster of closely packed pairs of transmembrane channels, the connexons, through which materials of low MW diffuse from one cell to a neighboring cell. The chain is Gap junction beta-1 protein (GJB1) from Equus caballus (Horse).